The chain runs to 26 residues: Melittin (26 aa).

G1 is subject to N-formylglycine; partial. Residue Q26 is modified to Glutamine amide.

Belongs to the melittin family. Monomer (in solution and for integration into membranes), homotetramer (in solution and potentially as a toroidal pore in membranes), and potenially homomultimer (as a toroidal pore in membranes). As to expression, expressed by the venom gland.

It is found in the secreted. Its subcellular location is the target cell membrane. In terms of biological role, main toxin of bee venom with strong hemolytic activity and antimicrobial activity. It has enhancing effects on bee venom phospholipase A2 activity. This amphipathic toxin binds to negatively charged membrane surface and forms pore by inserting into lipid bilayers inducing the leakage of ions and molecules and the enhancement of permeability that ultimately leads to cell lysis. It acts as a voltage-gated pore with higher selectivity for anions over cations. The ion conductance has been shown to be voltage-dependent. Self-association of melittin in membranes is promoted by high ionic strength, but not by the presence of negatively charged lipids. In vivo, intradermal injection into healthy human volunteers produce sharp pain sensation and an inflammatory response. It produces pain by activating primary nociceptor cells directly and indirectly due to its ability to activate plasma membrane phospholipase A2 and its pore-forming activity. This Apis florea (Dwarf honeybee) protein is Melittin (MELT).